We begin with the raw amino-acid sequence, 96 residues long: Co-chaperonin GroES (96 aa).

It belongs to the GroES chaperonin family. In terms of assembly, heptamer of 7 subunits arranged in a ring. Interacts with the chaperonin GroEL.

The protein localises to the cytoplasm. Its function is as follows. Together with the chaperonin GroEL, plays an essential role in assisting protein folding. The GroEL-GroES system forms a nano-cage that allows encapsulation of the non-native substrate proteins and provides a physical environment optimized to promote and accelerate protein folding. GroES binds to the apical surface of the GroEL ring, thereby capping the opening of the GroEL channel. The sequence is that of Co-chaperonin GroES from Vibrio campbellii (strain ATCC BAA-1116).